The primary structure comprises 189 residues: Flavin prenyltransferase UbiX (189 aa).

Residues Gly-10–Ser-12, Ser-37, Ser-88–Thr-91, and Arg-123 each bind FMN. Dimethylallyl phosphate contacts are provided by Tyr-153 and Arg-169.

It belongs to the UbiX/PAD1 family.

It carries out the reaction dimethylallyl phosphate + FMNH2 = prenylated FMNH2 + phosphate. It participates in cofactor biosynthesis; ubiquinone biosynthesis. In terms of biological role, flavin prenyltransferase that catalyzes the synthesis of the prenylated FMN cofactor (prenyl-FMN) for 4-hydroxy-3-polyprenylbenzoic acid decarboxylase UbiD. The prenyltransferase is metal-independent and links a dimethylallyl moiety from dimethylallyl monophosphate (DMAP) to the flavin N5 and C6 atoms of FMN. The chain is Flavin prenyltransferase UbiX from Escherichia coli O157:H7.